The sequence spans 235 residues: Probable deoxycytidine kinase FPV151 (235 aa).

Residue 30–38 (GNISAGKST) coordinates ATP. 3 residues coordinate substrate: E53, Y68, and Q79. E104 acts as the Proton acceptor in catalysis. Residues R105, D110, and E172 each coordinate substrate.

It belongs to the DCK/DGK family.

It catalyses the reaction 2'-deoxycytidine + a ribonucleoside 5'-triphosphate = dCMP + a ribonucleoside 5'-diphosphate + H(+). The sequence is that of Probable deoxycytidine kinase FPV151 from Vertebrata (FPV).